The primary structure comprises 734 residues: MTCICIFSIAFLLSFHLTTAQRSTGLQTYIVHVDKPDAQVLANSADLESYYNSFLPATVSGSEVPSRIIHSYHHVATGFAAKLSGEEVKEMEKKAGFVSAKLEKVLTLHTTHTPNFLGLYQNMGFWQESNYGKGVIIGLLDTGITPGHPSFSDVNMPSPPAKWKGKCEFTGNATCNKKIIGARNFISGSGVPPTDEEGHGTHTASTAAGNFVNDANVFGNANGTAVGMAPLAHIAMYKVCSEDGCSDADILAALDAAIDDGVDVLSLSLGGYSDPFYYDNIAIGAFAAIRKGIFVSASAGNDGPLNSTLSNEAPWILTVGASTHDRKIVATAVLGNGQQYDGESAFQPADFPHTLLPLVYPGTSDEEAAFCSSGSLDKFDVKGKVVVCDRGGDVARLEKSQTVKDAGGAAMILANLEIDGEGTFADAHVLPATHVGYAAGEMIKSYINSTSTPTAGILFKGTIIGFKSSPSVSSFSSRGPNLASPGIVKPDIIGPGVNILAAWPVSVENKTGTDLTFNIISGTSMSCPHLSGIVALLKSAHPDWSPAAIKSAIMTSADQSNLEGQPILDERNLPADIFATGAGHVNPSKASDPGLIYDIQLEDYIQYLCGLGYREKDIGLIVQETVKCESSISEAELNYPSFSIILGPKTQNYTRTVTNVGDASSTYTVNIAKTQGVDIVVEPATLVFTKMYQQATYTVSFTQSGDFTDRFVQGAISWSSNEYVVRSPISVKLE.

Positions 1-20 (MTCICIFSIAFLLSFHLTTA) are cleaved as a signal peptide. The Inhibitor I9 domain maps to 28–109 (TYIVHVDKPD…AKLEKVLTLH (82 aa)). The region spanning 114 to 591 (PNFLGLYQNM…AGHVNPSKAS (478 aa)) is the Peptidase S8 domain. The Charge relay system role is filled by D141. Residue N172 is glycosylated (N-linked (GlcNAc...) asparagine). H199 serves as the catalytic Charge relay system. N-linked (GlcNAc...) asparagine glycans are attached at residues N222 and N306. Residues 357-442 (PLVYPGTSDE…THVGYAAGEM (86 aa)) form the PA domain. Residues N448 and N509 are each glycosylated (N-linked (GlcNAc...) asparagine). The active-site Charge relay system is S524. N-linked (GlcNAc...) asparagine glycosylation is present at N652.

Belongs to the peptidase S8 family.

Its subcellular location is the secreted. The protein localises to the extracellular space. The protein resides in the apoplast. Its function is as follows. Required for arbuscular mycorrhiza (AM) development during AM symbiosis with AM fungi (e.g. Glomeromycota intraradices). The chain is Subtilisin-like protease from Petunia hybrida (Petunia).